Reading from the N-terminus, the 312-residue chain is Aspartate carbamoyltransferase catalytic subunit (312 aa).

Carbamoyl phosphate contacts are provided by Arg-58 and Thr-59. Lys-86 contributes to the L-aspartate binding site. Arg-108, His-136, and Gln-139 together coordinate carbamoyl phosphate. Arg-169 and Arg-223 together coordinate L-aspartate. Residues Gly-264 and Pro-265 each contribute to the carbamoyl phosphate site.

This sequence belongs to the aspartate/ornithine carbamoyltransferase superfamily. ATCase family. As to quaternary structure, heterododecamer (2C3:3R2) of six catalytic PyrB chains organized as two trimers (C3), and six regulatory PyrI chains organized as three dimers (R2).

The enzyme catalyses carbamoyl phosphate + L-aspartate = N-carbamoyl-L-aspartate + phosphate + H(+). Its pathway is pyrimidine metabolism; UMP biosynthesis via de novo pathway; (S)-dihydroorotate from bicarbonate: step 2/3. Functionally, catalyzes the condensation of carbamoyl phosphate and aspartate to form carbamoyl aspartate and inorganic phosphate, the committed step in the de novo pyrimidine nucleotide biosynthesis pathway. This Syntrophomonas wolfei subsp. wolfei (strain DSM 2245B / Goettingen) protein is Aspartate carbamoyltransferase catalytic subunit.